A 95-amino-acid polypeptide reads, in one-letter code: Auxin-responsive protein SAUR27 (95 aa).

The protein belongs to the ARG7 family. Interacts with PP2C-D1. As to expression, higher expression in thermo-responsive cultivars (e.g. cv. Alst-1, cv. Ang-0 and cv. Com-0) than in low thermo-responsive cultivars (e.g. cv. Dja-1, cv. El-0 and cv. Kon).

It localises to the cell membrane. Its function is as follows. Functions as a positive effector of cell expansion through modulation of auxin transport. Involved in thermo-responsiveness of plant architecture. Enhances plasma membrane H(+)-ATPase. The polypeptide is Auxin-responsive protein SAUR27 (Arabidopsis thaliana (Mouse-ear cress)).